We begin with the raw amino-acid sequence, 214 residues long: NAD(P)H-quinone oxidoreductase subunit 5, chloroplastic (214 aa).

2 helical membrane-spanning segments follow: residues 84 to 104 and 152 to 172; these read LFPL…GIPF and SLAI…YSFF.

It belongs to the complex I subunit 5 family. NDH is composed of at least 16 different subunits, 5 of which are encoded in the nucleus.

Its subcellular location is the plastid. It is found in the chloroplast thylakoid membrane. It catalyses the reaction a plastoquinone + NADH + (n+1) H(+)(in) = a plastoquinol + NAD(+) + n H(+)(out). It carries out the reaction a plastoquinone + NADPH + (n+1) H(+)(in) = a plastoquinol + NADP(+) + n H(+)(out). Functionally, NDH shuttles electrons from NAD(P)H:plastoquinone, via FMN and iron-sulfur (Fe-S) centers, to quinones in the photosynthetic chain and possibly in a chloroplast respiratory chain. The immediate electron acceptor for the enzyme in this species is believed to be plastoquinone. Couples the redox reaction to proton translocation, and thus conserves the redox energy in a proton gradient. This is NAD(P)H-quinone oxidoreductase subunit 5, chloroplastic (ndhF) from Brachypodium pinnatum (Tor grass).